Consider the following 533-residue polypeptide: Probable metalloreductase AIM14 (533 aa).

7 helical membrane passes run 17–37 (IPYG…LIGA), 61–81 (GGSP…PFVH), 102–122 (VLAT…PGYV), 136–156 (SLCL…ALDS), 168–188 (IPNL…LLSV), 198–218 (SFYL…AYHA), and 220–240 (PGVF…YILS). The region spanning 96 to 213 (LGRLSYVLAT…IIGAWVFVFL (118 aa)) is the Ferric oxidoreductase domain. The 127-residue stretch at 240–366 (SKTVPARGVE…GGSGLSYALP (127 aa)) folds into the FAD-binding FR-type domain.

Belongs to the ferric reductase (FRE) family. AIM14 subfamily.

It localises to the membrane. Probable cell surface metalloreductase. May be involved in iron or copper homeostasis. This is Probable metalloreductase AIM14 (AIM14) from Lachancea thermotolerans (strain ATCC 56472 / CBS 6340 / NRRL Y-8284) (Yeast).